Reading from the N-terminus, the 287-residue chain is Lycopene elongase/hydratase (287 aa).

7 helical membrane-spanning segments follow: residues 15–35 (ISWVNTAYPFGLAYLLNAGEI), 37–57 (WLFWLGIVFFLIPYNIAMYGI), 97–117 (IPFLVILFIFGTWMSSLWLTI), 137–157 (FIDALTSSTHFTSPALIGATI), 166–186 (MWIALGSFFLWGMASQILGAV), 218–238 (LLAAVLVTTLPNPAWIIGIAI), and 265–285 (VFLWLNYFVGAVITILLIAIH).

It belongs to the UbiA prenyltransferase family.

It localises to the cell membrane. The catalysed reaction is all-trans-lycopene + dimethylallyl diphosphate + A + H2O = nonaflavuxanthin + AH2 + diphosphate. The enzyme catalyses nonaflavuxanthin + dimethylallyl diphosphate + A + H2O = flavuxanthin + AH2 + diphosphate. Its pathway is carotenoid biosynthesis. Catalyzes the elongation of the C(40) carotenoid all-trans-lycopene to the acyclic C(50) carotenoid flavuxanthin during decaprenoxanthin biosynthesis. Acts as a bifunctional enzyme that catalyzes the elongation of lycopene by attaching a C(5) isoprene unit at C-2, as well as the hydroxylation of the new isoprene unit. The enzyme acts at both ends of the substrate, forming the C(50) carotenoid flavuxanthin via the C(45) intermediate nonaflavuxanthin. The sequence is that of Lycopene elongase/hydratase from Corynebacterium glutamicum (Brevibacterium saccharolyticum).